The chain runs to 444 residues: Tubulin beta-7 chain (444 aa).

Residues glutamine 11, glutamate 69, serine 138, glycine 142, threonine 143, glycine 144, asparagine 204, and asparagine 226 each coordinate GTP. Glutamate 69 serves as a coordination point for Mg(2+).

This sequence belongs to the tubulin family. As to quaternary structure, dimer of alpha and beta chains. A typical microtubule is a hollow water-filled tube with an outer diameter of 25 nm and an inner diameter of 15 nM. Alpha-beta heterodimers associate head-to-tail to form protofilaments running lengthwise along the microtubule wall with the beta-tubulin subunit facing the microtubule plus end conferring a structural polarity. Microtubules usually have 13 protofilaments but different protofilament numbers can be found in some organisms and specialized cells. The cofactor is Mg(2+).

It localises to the cytoplasm. The protein localises to the cytoskeleton. Its function is as follows. Tubulin is the major constituent of microtubules, a cylinder consisting of laterally associated linear protofilaments composed of alpha- and beta-tubulin heterodimers. Microtubules grow by the addition of GTP-tubulin dimers to the microtubule end, where a stabilizing cap forms. Below the cap, tubulin dimers are in GDP-bound state, owing to GTPase activity of alpha-tubulin. This is Tubulin beta-7 chain from Gossypium hirsutum (Upland cotton).